The chain runs to 392 residues: Phosphoglycerate kinase (392 aa).

Substrate-binding positions include 19-21, arginine 35, 58-61, arginine 117, and arginine 150; these read DFN and HMGR. Residues lysine 201, glutamate 323, and 349-352 each bind ATP; that span reads GGDS.

The protein belongs to the phosphoglycerate kinase family. As to quaternary structure, monomer.

It is found in the cytoplasm. It catalyses the reaction (2R)-3-phosphoglycerate + ATP = (2R)-3-phospho-glyceroyl phosphate + ADP. The protein operates within carbohydrate degradation; glycolysis; pyruvate from D-glyceraldehyde 3-phosphate: step 2/5. This is Phosphoglycerate kinase from Desulfotalea psychrophila (strain LSv54 / DSM 12343).